The chain runs to 450 residues: UDP-N-acetylmuramoylalanine--D-glutamate ligase (450 aa).

119–125 (GSNGKTT) provides a ligand contact to ATP.

Belongs to the MurCDEF family.

The protein localises to the cytoplasm. The catalysed reaction is UDP-N-acetyl-alpha-D-muramoyl-L-alanine + D-glutamate + ATP = UDP-N-acetyl-alpha-D-muramoyl-L-alanyl-D-glutamate + ADP + phosphate + H(+). It functions in the pathway cell wall biogenesis; peptidoglycan biosynthesis. Cell wall formation. Catalyzes the addition of glutamate to the nucleotide precursor UDP-N-acetylmuramoyl-L-alanine (UMA). This chain is UDP-N-acetylmuramoylalanine--D-glutamate ligase, found in Streptococcus pneumoniae (strain CGSP14).